A 116-amino-acid chain; its full sequence is Ribulose bisphosphate carboxylase small subunit 1 (116 aa).

This sequence belongs to the RuBisCO small chain family. Heterohexadecamer of 8 large and 8 small subunits.

Its subcellular location is the cytoplasm. In terms of biological role, ruBisCO catalyzes two reactions: the carboxylation of D-ribulose 1,5-bisphosphate, the primary event in carbon dioxide fixation, as well as the oxidative fragmentation of the pentose substrate. Both reactions occur simultaneously and in competition at the same active site. Although the small subunit is not catalytic it is essential for maximal activity. Can replace the endogenous type I ccbS gene in H.neapolitanus, reconstituting RuBisCO with about 10% of normal activity; the active enzyme is targeted to carboxysomes. This chain is Ribulose bisphosphate carboxylase small subunit 1, found in Hydrogenovibrio crunogenus (strain DSM 25203 / XCL-2) (Thiomicrospira crunogena).